A 1225-amino-acid chain; its full sequence is Cohesin subunit SA-3 (1225 aa).

Positions 1–97 (MSSPLQRAVG…HSRKQSEPPA (97 aa)) are disordered. Positions 15–26 (ALSASSSSSASL) are enriched in low complexity. Acidic residues predominate over residues 45–54 (LADEDTDFED). Basic residues-rich tracts occupy residues 59-69 (NVKKRAAKRPP) and 76-90 (KHPK…RHSR). The SCD domain maps to 309–394 (FVHRYRDVLP…SRFKDRMVSM (86 aa)). Disordered regions lie at residues 546 to 567 (SEGH…KERK), 1063 to 1113 (AETS…STAV), and 1177 to 1225 (EEDE…IEDF). Residues 1078–1089 (VEGPAKPNREDV) show a composition bias toward basic and acidic residues. Residues 1090-1099 (SSSQEESLQL) show a composition bias toward low complexity. Over residues 1177–1191 (EEDEEEELEIQDESN) the composition is skewed to acidic residues. The segment covering 1198-1209 (DMQASSYSSTSE) has biased composition (polar residues). Ser-1203 bears the Phosphoserine mark. Residues 1216-1225 (DSTELDIEDF) are compositionally biased toward acidic residues.

This sequence belongs to the SCC3 family. In terms of assembly, component of the meiosis-specific cohesin complex, which also contains the SMC1 (SMC1A or SMC1B) and SMC3 heterodimer. Such complex likely contains RAD21, or the meiosis-specific related protein REC8. Interacts with CCDC79/TERB1; recruiting cohesin to telomeres to develop structural rigidity. Phosphorylated. In terms of tissue distribution, testis specific.

It is found in the nucleus. It localises to the chromosome. The protein resides in the centromere. Its function is as follows. Meiosis specific component of cohesin complex. The cohesin complex is required for the cohesion of sister chromatids after DNA replication. The cohesin complex apparently forms a large proteinaceous ring within which sister chromatids can be trapped. At anaphase, the complex is cleaved and dissociates from chromatin, allowing sister chromatids to segregate. The meiosis-specific cohesin complex probably replaces mitosis specific cohesin complex when it dissociates from chromatin during prophase I. The protein is Cohesin subunit SA-3 (STAG3) of Homo sapiens (Human).